The following is a 780-amino-acid chain: Catenin beta-1 (780 aa).

The interval 34-56 (GIHSGATTTAPSLSGKGNPEDDD) is disordered. ARM repeat units follow at residues 140 to 179 (NYQD…QLSK), 224 to 263 (REGL…NLLL), 266 to 305 (EGAK…ILAY), 350 to 389 (SSNK…NLSD), 399 to 430 (GLLG…TCNN), 431 to 472 (YKNK…HLTS), 478 to 518 (EMAQ…NLAL), 520 to 561 (PANH…QFVE), 583 to 622 (IHNR…ELAQ), and 624 to 663 (KEAA…RMSE). Over residues 735 to 744 (EHEMAGHHPG) the composition is skewed to basic and acidic residues. A disordered region spans residues 735–770 (EHEMAGHHPGPDYPVDGLPDLGHTQDLIDGLPPGDS).

This sequence belongs to the beta-catenin family. Interacts with adnpa. Interacts with cdh1 during oogenesis and in the unfertilized egg. Interacts with ctnna1 and cdh2. In terms of processing, phosphorylation by gsk3b promotes ubiquitination and subsequent degradation by the proteasome. Post-translationally, ubiquitinated when phosphorylated by gsk3b, leading to its degradation. In terms of tissue distribution, expressed in the successional lamina, also expressed in both the epithelial and mesenchymal cells of the developing replacement tooth (at protein level). Expressed in the enamel organ as well as in the inner and outer dental epithelium during replacement tooth morphogenesis (at protein level). Expressed in the differentiated, polarized odontoblasts that line the dentine matrix as well as in the inner and outer dental epithelium during tooth cytodifferentiation (at protein level). Expressed in the reduced enamel organ, odontoblasts and weakly at the center of the dental papilla of the functional tooth as well as in the epithelial crypts surrounding the functional tooth (at protein level). Expressed in the liver (at protein level). Expressed at intercalated disks in the heart (at protein level). Expressed in the ovary.

Its subcellular location is the cytoplasm. It is found in the nucleus. The protein localises to the cell membrane. The protein resides in the cell junction. It localises to the adherens junction. Key downstream component of the canonical Wnt signaling pathway. In the absence of Wnt, forms a complex with axin1, axin2, apc, csnk1a1 and gsk3b that promotes phosphorylation on N-terminal Ser and Thr residues and ubiquitination of ctnnb1 and its subsequent degradation by the proteasome. In the presence of Wnt ligand, ctnnb1 is not ubiquitinated and accumulates in the nucleus, where it acts as a coactivator for transcription factors of the TCF/LEF family, leading to activate Wnt responsive genes. Plays a key role in dorsoventral patterning: in prospective ventral blastomeres, its down-regulation by axin1 and axin2 leads to inhibit the Wnt signaling pathway, while in prospective dorsal blastomeres, degradation of axin results in stabilization and nuclear translocation of ctnnb1. In Danio rerio (Zebrafish), this protein is Catenin beta-1.